Here is a 346-residue protein sequence, read N- to C-terminus: Phosphoribosylformylglycinamidine cyclo-ligase (346 aa).

The protein belongs to the AIR synthase family.

The protein resides in the cytoplasm. The catalysed reaction is 2-formamido-N(1)-(5-O-phospho-beta-D-ribosyl)acetamidine + ATP = 5-amino-1-(5-phospho-beta-D-ribosyl)imidazole + ADP + phosphate + H(+). It participates in purine metabolism; IMP biosynthesis via de novo pathway; 5-amino-1-(5-phospho-D-ribosyl)imidazole from N(2)-formyl-N(1)-(5-phospho-D-ribosyl)glycinamide: step 2/2. In Erwinia tasmaniensis (strain DSM 17950 / CFBP 7177 / CIP 109463 / NCPPB 4357 / Et1/99), this protein is Phosphoribosylformylglycinamidine cyclo-ligase.